Here is a 389-residue protein sequence, read N- to C-terminus: 5-hydroxytryptamine receptor 1B (389 aa).

Residues 1 to 45 lie on the Extracellular side of the membrane; that stretch reads MGNPEASCTPPAVLGSQTGLPHANVSAPPNNCSAPSHIYQDSIAL. N-linked (GlcNAc...) asparagine glycans are attached at residues N24 and N31. A helical transmembrane segment spans residues 46–71; it reads PWKVLLVVLLALITLATTLSNAFVIA. At 72–85 the chain is on the cytoplasmic side; sequence TVYRTRKLHTPANY. A helical transmembrane segment spans residues 86–110; that stretch reads LIASLAFTDLLVSILVMPISTMYTV. At 111–118 the chain is on the extracellular side; it reads TGRWTLGQ. Residues 119–144 traverse the membrane as a helical segment; the sequence is ALCDFWLSSDITCCTASIMHLCVIAL. A disulfide bridge links C121 with C198. Positions 128 and 133 each coordinate ergotamine. The DRY motif; important for ligand-induced conformation changes and signaling signature appears at 145–147; sequence DRY. Residues 145–164 are Cytoplasmic-facing; it reads DRYWAITDAVGYSAKRTPRR. A helical transmembrane segment spans residues 165–183; sequence AAGMIALVWVFSICISLPP. Residues 184-204 are Extracellular-facing; it reads FFWRQAKAEEEVLDCLVNTDH. V200 provides a ligand contact to ergotamine. The helical transmembrane segment at 205–228 threads the bilayer; that stretch reads VLYTVYSTGGAFYLPTLLLIALYG. Residues 229-314 lie on the Cytoplasmic side of the membrane; it reads RIYVEARSRI…AARERKATKT (86 aa). The helical transmembrane segment at 315–336 threads the bilayer; sequence LGVILGAFIVCWLPFFIISLVM. At 337-346 the chain is on the extracellular side; that stretch reads PICKDACWFH. Residues 347 to 369 form a helical membrane-spanning segment; the sequence is MAIFDFFTWLGYLNSLINPIIYT. Positions 364 to 368 match the NPxxY motif; important for ligand-induced conformation changes and signaling motif; the sequence is NPIIY. The Cytoplasmic segment spans residues 370-389; sequence MSNEDFKQAFHKLIRFKCTT. The S-palmitoyl cysteine moiety is linked to residue C387.

The protein belongs to the G-protein coupled receptor 1 family. In terms of assembly, homodimer. Heterodimer with HTR1D. Phosphorylated. Desensitization of the receptor may be mediated by its phosphorylation. Post-translationally, palmitoylated.

It localises to the cell membrane. Functionally, G-protein coupled receptor for 5-hydroxytryptamine (serotonin). Also functions as a receptor for ergot alkaloid derivatives, various anxiolytic and antidepressant drugs and other psychoactive substances, such as lysergic acid diethylamide (LSD). Ligand binding causes a conformation change that triggers signaling via guanine nucleotide-binding proteins (G proteins) and modulates the activity of downstream effectors, such as adenylate cyclase. HTR1B is coupled to G(i)/G(o) G alpha proteins and mediates inhibitory neurotransmission by inhibiting adenylate cyclase activity. Arrestin family members inhibit signaling via G proteins and mediate activation of alternative signaling pathways. Regulates the release of 5-hydroxytryptamine, dopamine and acetylcholine in the brain, and thereby affects neural activity, nociceptive processing, pain perception, mood and behavior. Besides, plays a role in vasoconstriction of cerebral arteries. The polypeptide is 5-hydroxytryptamine receptor 1B (HTR1B) (Cavia porcellus (Guinea pig)).